The following is a 355-amino-acid chain: UDP-N-acetylglucosamine--N-acetylmuramyl-(pentapeptide) pyrophosphoryl-undecaprenol N-acetylglucosamine transferase (355 aa).

UDP-N-acetyl-alpha-D-glucosamine contacts are provided by residues 14–16 (TGG), asparagine 126, arginine 164, serine 190, isoleucine 243, 262–267 (ALTVAE), and glutamine 288.

It belongs to the glycosyltransferase 28 family. MurG subfamily.

It localises to the cell inner membrane. It carries out the reaction di-trans,octa-cis-undecaprenyl diphospho-N-acetyl-alpha-D-muramoyl-L-alanyl-D-glutamyl-meso-2,6-diaminopimeloyl-D-alanyl-D-alanine + UDP-N-acetyl-alpha-D-glucosamine = di-trans,octa-cis-undecaprenyl diphospho-[N-acetyl-alpha-D-glucosaminyl-(1-&gt;4)]-N-acetyl-alpha-D-muramoyl-L-alanyl-D-glutamyl-meso-2,6-diaminopimeloyl-D-alanyl-D-alanine + UDP + H(+). The protein operates within cell wall biogenesis; peptidoglycan biosynthesis. Cell wall formation. Catalyzes the transfer of a GlcNAc subunit on undecaprenyl-pyrophosphoryl-MurNAc-pentapeptide (lipid intermediate I) to form undecaprenyl-pyrophosphoryl-MurNAc-(pentapeptide)GlcNAc (lipid intermediate II). The sequence is that of UDP-N-acetylglucosamine--N-acetylmuramyl-(pentapeptide) pyrophosphoryl-undecaprenol N-acetylglucosamine transferase from Psychromonas ingrahamii (strain DSM 17664 / CCUG 51855 / 37).